A 259-amino-acid polypeptide reads, in one-letter code: Leucine-rich repeat-containing protein 61 (259 aa).

LRR repeat units follow at residues 54 to 75 (NLEW…ASLR), 76 to 97 (QLAV…AACE), and 98 to 119 (NLQS…QCLA). Residues 138 to 178 (NPLCANASYWAVVRELLPGLKVIDGERVSGRGSELYQLCRD) form the LRRCT domain.

This chain is Leucine-rich repeat-containing protein 61 (Lrrc61), found in Mus musculus (Mouse).